A 290-amino-acid chain; its full sequence is Lipoyl synthase (290 aa).

7 residues coordinate [4Fe-4S] cluster: Cys-44, Cys-49, Cys-55, Cys-70, Cys-74, Cys-77, and Ser-281. The region spanning 56–270 is the Radical SAM core domain; sequence WRCGTATFMI…KQIGLEKGFS (215 aa).

Belongs to the radical SAM superfamily. Lipoyl synthase family. [4Fe-4S] cluster is required as a cofactor.

It is found in the cytoplasm. It catalyses the reaction [[Fe-S] cluster scaffold protein carrying a second [4Fe-4S](2+) cluster] + N(6)-octanoyl-L-lysyl-[protein] + 2 oxidized [2Fe-2S]-[ferredoxin] + 2 S-adenosyl-L-methionine + 4 H(+) = [[Fe-S] cluster scaffold protein] + N(6)-[(R)-dihydrolipoyl]-L-lysyl-[protein] + 4 Fe(3+) + 2 hydrogen sulfide + 2 5'-deoxyadenosine + 2 L-methionine + 2 reduced [2Fe-2S]-[ferredoxin]. It participates in protein modification; protein lipoylation via endogenous pathway; protein N(6)-(lipoyl)lysine from octanoyl-[acyl-carrier-protein]: step 2/2. Functionally, catalyzes the radical-mediated insertion of two sulfur atoms into the C-6 and C-8 positions of the octanoyl moiety bound to the lipoyl domains of lipoate-dependent enzymes, thereby converting the octanoylated domains into lipoylated derivatives. The protein is Lipoyl synthase of Treponema denticola (strain ATCC 35405 / DSM 14222 / CIP 103919 / JCM 8153 / KCTC 15104).